A 506-amino-acid polypeptide reads, in one-letter code: Cationic amino acid transporter 8 (506 aa).

Residues asparagine 2 and asparagine 5 are each glycosylated (N-linked (GlcNAc...) asparagine). A helical transmembrane segment spans residues 38 to 58 (FYLLLIIIIYTATSACIYFDW). An N-linked (GlcNAc...) asparagine glycan is attached at asparagine 75. A run of 5 helical transmembrane segments spans residues 93–113 (NLYP…GFLY), 116–136 (IGPK…WIFL), 147–167 (LIGF…ILTV), 174–194 (ISTF…AVPA), and 211–231 (ICYG…TFLL). Asparagine 277 is a glycosylation site (N-linked (GlcNAc...) asparagine). The chain crosses the membrane as a helical span at residues 302–322 (ILLFFKVLLSYPSICIIVYFI). Asparagine 325 and asparagine 342 each carry an N-linked (GlcNAc...) asparagine glycan. The next 4 membrane-spanning stretches (helical) occupy residues 344-364 (SIIN…IIFG), 372-392 (AAII…TALI), 399-419 (LISA…IYCF), and 427-447 (VVFG…SLFC). 2 N-linked (GlcNAc...) asparagine glycosylation sites follow: asparagine 453 and asparagine 456. The chain crosses the membrane as a helical span at residues 466-486 (TISILLAISFIIMFLPLSILY).

It belongs to the SLC43A transporter (TC 2.A.1.44) family.

The protein localises to the cell membrane. Functionally, cationic amino acid transporter which transports L-arginine, L-lysine and, to a lesser extent, L-histidine and ornithine. Plays an essential role in gametogenesis. The chain is Cationic amino acid transporter 8 from Plasmodium berghei (strain Anka).